The following is a 224-amino-acid chain: UPF0758 protein Tbd_2588 (224 aa).

In terms of domain architecture, MPN spans 102 to 224 (ALSSPAAVRD…ALSFAEAGHL (123 aa)). Positions 173, 175, and 186 each coordinate Zn(2+). The short motif at 173 to 186 (HNHPSGVNEPSQAD) is the JAMM motif element.

Belongs to the UPF0758 family.

This is UPF0758 protein Tbd_2588 from Thiobacillus denitrificans (strain ATCC 25259 / T1).